The chain runs to 123 residues: Large ribosomal subunit protein uL18 (123 aa).

It belongs to the universal ribosomal protein uL18 family. As to quaternary structure, part of the 50S ribosomal subunit; part of the 5S rRNA/L5/L18/L25 subcomplex. Contacts the 5S and 23S rRNAs.

In terms of biological role, this is one of the proteins that bind and probably mediate the attachment of the 5S RNA into the large ribosomal subunit, where it forms part of the central protuberance. The polypeptide is Large ribosomal subunit protein uL18 (Symbiobacterium thermophilum (strain DSM 24528 / JCM 14929 / IAM 14863 / T)).